A 30-amino-acid polypeptide reads, in one-letter code: Dermaseptin-3.4TR (30 aa).

In terms of tissue distribution, expressed by the skin glands.

It is found in the secreted. Has antimicrobial activity. This is Dermaseptin-3.4TR from Phyllomedusa trinitatis (Trinidad leaf frog).